A 462-amino-acid polypeptide reads, in one-letter code: Arginine-specific demethylase JMJ20 (462 aa).

Residues 115–287 (VKEYPDYTAY…WVWDLLWKDY (173 aa)) enclose the JmjC domain. Residues H177, D179, and H255 each coordinate Fe cation.

It belongs to the JARID1 histone demethylase family. Fe(2+) is required as a cofactor. Mostly expressed in leaves, and, to a lower extent, in inflorescences, roots, siliques and stems.

It localises to the nucleus. The enzyme catalyses N(omega),N(omega)-dimethyl-L-arginyl-[protein] + 2-oxoglutarate + O2 = N(omega)-methyl-L-arginyl-[protein] + formaldehyde + succinate + CO2. Its function is as follows. Histone demethylase that demethylates 'Arg-3' (H4R3me) of histone H4 with a specific activity for H4R3me2. Involved in the positive regulation of gene expression. Together with JMJ22, positively regulates seed germination by promoting the removal of repressive histone arginine methylations (e.g. H4R3me2) at GA3ox1 and GA3ox2 to trigger gibberellic acid (GA) biosynthesis. In Arabidopsis thaliana (Mouse-ear cress), this protein is Arginine-specific demethylase JMJ20.